Consider the following 328-residue polypeptide: Arylacetonitrilase (328 aa).

The region spanning 5-278 (VRVAVTQAEP…EGIIYADLDL (274 aa)) is the CN hydrolase domain. Glu45 serves as the catalytic Proton acceptor. Residue Lys125 is part of the active site. Cys160 acts as the Nucleophile in catalysis.

The protein belongs to the carbon-nitrogen hydrolase superfamily. Nitrilase family.

The catalysed reaction is a nitrile + 2 H2O = a carboxylate + NH4(+). It carries out the reaction 4-chlorophenylacetonitrile + 2 H2O = 4-chlorophenylacetate + NH4(+). Functionally, nitrilase that hydrolyzes preferentially phenylacetonitrile and (R,S)-mandelonitrile. Also acts on dinitriles like phenylenediacetonitriles (PDAs) 1,2-PDA, 1,3-PDA, and 1,4-PDA, and cyanophenyl acetonitriles (CPAs) 2-CPA and 4-CPA. The protein is Arylacetonitrilase (nit2) of Aspergillus kawachii (strain NBRC 4308) (White koji mold).